A 983-amino-acid polypeptide reads, in one-letter code: UPF0182 protein MLBr00644 (983 aa).

7 consecutive transmembrane segments (helical) span residues 19 to 39, 63 to 83, 113 to 133, 175 to 195, 210 to 230, 259 to 279, and 287 to 307; these read LIMV…LVDA, VVVF…GLAV, LIGV…AQSY, FVAV…FGGI, LQLV…YWLD, KLIL…AITL, and IGLV…PLIV.

Belongs to the UPF0182 family.

The protein localises to the cell membrane. The chain is UPF0182 protein MLBr00644 from Mycobacterium leprae (strain Br4923).